A 393-amino-acid chain; its full sequence is MWSSLNDWLWNERLWLPANISWAQLEDHDGLVFPHPQDTLMAVPLALALVVVRFTFERFVALPLSRWLGVRNQIRRPADPNATLEKHYLMKGREPTESQMNLLATQCGLTLRQTQCWFRRRRNQDRPCLTKKFCESSWKFVFYLCCFVCGTMVLYHESWLWTPVKCWENYPHQPLKPGLYHWYLLELSFYISLLMTLPFDTKRKDFKEQVIHHFVTIILISFSYSLNLLRIGSLVLLLHDSADYLLEASKLFNYMHWRRMCDTLFIIFSLVFFYTRLVLFPTRILYTTFFESIGNFSPFFGYYFLNILLVILQLLHVFWSWLILCMIYSFIKKGQMEKDVRSDVEELDSSDGEAAEECPQMKNGAAQRPGAAPTDGPRSRAAGRMVNRHTPAT.

Residues Met1–Leu31 are Lumenal-facing. Residue Asn19 is glycosylated (N-linked (GlcNAc...) asparagine). The chain crosses the membrane as a helical span at residues Val32–Val52. The interval Trp67–Cys128 is homeobox-like. One can recognise a TLC domain in the interval Lys131–Lys332. 4 consecutive transmembrane segments (helical) span residues Phe140–Leu160, Leu179–Phe199, Gln209–Leu229, and Met260–Phe280. Positions Glu291–Gly301 match the Last loop motif motif. Residues Phe304 to Leu324 form a helical membrane-spanning segment. Over Cys325–Thr393 the chain is Cytoplasmic. Residues Ser342, Ser349, and Ser350 each carry the phosphoserine modification. The segment covering Glu346–Glu356 has biased composition (acidic residues). The disordered stretch occupies residues Glu346–Thr393.

In terms of processing, phosphorylated at the C-terminus by CK2.

It localises to the endoplasmic reticulum membrane. The enzyme catalyses sphinganine + octadecanoyl-CoA = N-(octadecanoyl)-sphinganine + CoA + H(+). The catalysed reaction is eicosanoyl-CoA + sphinganine = N-eicosanoylsphinganine + CoA + H(+). It carries out the reaction docosanoyl-CoA + sphinganine = N-docosanoylsphinganine + CoA + H(+). It catalyses the reaction tetracosanoyl-CoA + sphinganine = N-tetracosanoylsphinganine + CoA + H(+). The enzyme catalyses hexacosanoyl-CoA + sphinganine = N-hexacosanoylsphinganine + CoA + H(+). The catalysed reaction is a fatty acyl-CoA + sphing-4-enine = an N-acylsphing-4-enine + CoA + H(+). It carries out the reaction sphing-4-enine + octadecanoyl-CoA = N-octadecanoylsphing-4-enine + CoA + H(+). It catalyses the reaction hexadecasphinganine + octadecanoyl-CoA = N-octadecanoylhexadecasphinganine + CoA + H(+). The protein operates within lipid metabolism; sphingolipid metabolism. Functionally, ceramide synthase that catalyzes formation of ceramide from sphinganine and acyl-CoA substrates, with high selectivity toward long and very-long chains (C18:0-C22:0) as acyl donor. This is Ceramide synthase 4 from Bos taurus (Bovine).